A 162-amino-acid chain; its full sequence is Ribonuclease H (162 aa).

The RNase H type-1 domain occupies aspartate 6–glutamate 154. The Mg(2+) site is built by aspartate 15, glutamate 53, aspartate 82, and aspartate 146.

It belongs to the RNase H family. In terms of assembly, monomer. Requires Mg(2+) as cofactor.

It localises to the cytoplasm. It carries out the reaction Endonucleolytic cleavage to 5'-phosphomonoester.. Its function is as follows. Endonuclease that specifically degrades the RNA of RNA-DNA hybrids. This Nitrosomonas eutropha (strain DSM 101675 / C91 / Nm57) protein is Ribonuclease H.